We begin with the raw amino-acid sequence, 123 residues long: uncharacterized protein (123 aa).

Residues 31–57 show a composition bias toward basic and acidic residues; sequence KLRTEAKKSKDKERTKEKEKHESLAKE. The tract at residues 31-58 is disordered; it reads KLRTEAKKSKDKERTKEKEKHESLAKEK. The helical transmembrane segment at 91–111 threads the bilayer; the sequence is IIIFLLILLVSGLMVGIFFGI.

It localises to the membrane. This is an uncharacterized protein from Mycoplasma genitalium (strain ATCC 33530 / DSM 19775 / NCTC 10195 / G37) (Mycoplasmoides genitalium).